The sequence spans 439 residues: Xylose isomerase (439 aa).

Active-site residues include His-101 and Asp-104. Residues Glu-232, Glu-268, His-271, Asp-296, Asp-307, Asp-309, and Asp-339 each coordinate Mg(2+).

Belongs to the xylose isomerase family. Homotetramer. It depends on Mg(2+) as a cofactor.

Its subcellular location is the cytoplasm. The catalysed reaction is alpha-D-xylose = alpha-D-xylulofuranose. In Pectobacterium atrosepticum (strain SCRI 1043 / ATCC BAA-672) (Erwinia carotovora subsp. atroseptica), this protein is Xylose isomerase.